Here is a 53-residue protein sequence, read N- to C-terminus: uncharacterized protein (53 aa).

Residues 1–23 (MSILLKILFKLLLLILSITFVIT) form the signal peptide.

This is an uncharacterized protein from Acheta domesticus (House cricket).